Here is a 108-residue protein sequence, read N- to C-terminus: MNEIFKELEGDCMGENVQLKDVIFNDSKYSKTKKVLAIMFITFVFLLQVNGTDKMIGFIFVFTGTVIGVTYSVCKLLFYNTKRYIKDIVFLIIFVCLFVWGIITFFNL.

3 helical membrane passes run 36–56, 58–78, and 88–108; these read LAIM…DKMI, FIFV…KLLF, and IVFL…FFNL.

It localises to the cell membrane. This is an uncharacterized protein from Alkalihalophilus pseudofirmus (strain ATCC BAA-2126 / JCM 17055 / OF4) (Bacillus pseudofirmus).